Here is a 318-residue protein sequence, read N- to C-terminus: Methionyl-tRNA formyltransferase (318 aa).

110–113 (SLLP) is a binding site for (6S)-5,6,7,8-tetrahydrofolate.

Belongs to the Fmt family.

The catalysed reaction is L-methionyl-tRNA(fMet) + (6R)-10-formyltetrahydrofolate = N-formyl-L-methionyl-tRNA(fMet) + (6S)-5,6,7,8-tetrahydrofolate + H(+). Its function is as follows. Attaches a formyl group to the free amino group of methionyl-tRNA(fMet). The formyl group appears to play a dual role in the initiator identity of N-formylmethionyl-tRNA by promoting its recognition by IF2 and preventing the misappropriation of this tRNA by the elongation apparatus. This Latilactobacillus sakei subsp. sakei (strain 23K) (Lactobacillus sakei subsp. sakei) protein is Methionyl-tRNA formyltransferase.